The chain runs to 162 residues: Probable cytosine deaminase (162 aa).

One can recognise a CMP/dCMP-type deaminase domain in the interval 8-132 (EKDLAYLREA…PLYINSRDIL (125 aa)). Histidine 59 lines the Zn(2+) pocket. Glutamate 61 functions as the Proton donor in the catalytic mechanism. Residues cysteine 87 and cysteine 90 each coordinate Zn(2+). Substrate is bound at residue aspartate 159.

Belongs to the cytidine and deoxycytidylate deaminase family. As to quaternary structure, homodimer. It depends on Zn(2+) as a cofactor.

The protein resides in the cytoplasm. Its subcellular location is the nucleus. It catalyses the reaction cytosine + H2O + H(+) = uracil + NH4(+). It functions in the pathway pyrimidine metabolism; UMP biosynthesis via salvage pathway; uracil from cytosine: step 1/1. Functionally, catalyzes the hydrolytic deamination of cytosine to uracil or 5-methylcytosine to thymine. Is involved in the pyrimidine salvage pathway, which allows the cell to utilize cytosine for pyrimidine nucleotide synthesis. The protein is Probable cytosine deaminase of Schizosaccharomyces pombe (strain 972 / ATCC 24843) (Fission yeast).